We begin with the raw amino-acid sequence, 87 residues long: Phosphoribosyl-ATP pyrophosphatase (87 aa).

The protein belongs to the PRA-PH family.

Its subcellular location is the cytoplasm. The catalysed reaction is 1-(5-phospho-beta-D-ribosyl)-ATP + H2O = 1-(5-phospho-beta-D-ribosyl)-5'-AMP + diphosphate + H(+). Its pathway is amino-acid biosynthesis; L-histidine biosynthesis; L-histidine from 5-phospho-alpha-D-ribose 1-diphosphate: step 2/9. This is Phosphoribosyl-ATP pyrophosphatase from Saccharopolyspora erythraea (strain ATCC 11635 / DSM 40517 / JCM 4748 / NBRC 13426 / NCIMB 8594 / NRRL 2338).